A 181-amino-acid polypeptide reads, in one-letter code: uncharacterized protein (181 aa).

Gly residues-rich tracts occupy residues 143 to 156 (RRGGRYGDFGGPRG) and 170 to 181 (GPFGPGYRGPRF). The interval 143 to 181 (RRGGRYGDFGGPRGPRGPRNDGPFGPFGPFGPGYRGPRF) is disordered.

As to quaternary structure, has been detected in a cytochrome bc1-aa3 supercomplex; its deletion however leaves complex activity unaffected.

This is an uncharacterized protein from Corynebacterium glutamicum (strain ATCC 13032 / DSM 20300 / JCM 1318 / BCRC 11384 / CCUG 27702 / LMG 3730 / NBRC 12168 / NCIMB 10025 / NRRL B-2784 / 534).